Consider the following 382-residue polypeptide: Succinyl-diaminopimelate desuccinylase (382 aa).

Histidine 71 lines the Zn(2+) pocket. Aspartate 73 is an active-site residue. Aspartate 105 contacts Zn(2+). The active-site Proton acceptor is glutamate 139. The Zn(2+) site is built by glutamate 140, glutamate 168, and histidine 354.

The protein belongs to the peptidase M20A family. DapE subfamily. Homodimer. Zn(2+) serves as cofactor. Co(2+) is required as a cofactor.

It catalyses the reaction N-succinyl-(2S,6S)-2,6-diaminopimelate + H2O = (2S,6S)-2,6-diaminopimelate + succinate. It functions in the pathway amino-acid biosynthesis; L-lysine biosynthesis via DAP pathway; LL-2,6-diaminopimelate from (S)-tetrahydrodipicolinate (succinylase route): step 3/3. In terms of biological role, catalyzes the hydrolysis of N-succinyl-L,L-diaminopimelic acid (SDAP), forming succinate and LL-2,6-diaminopimelate (DAP), an intermediate involved in the bacterial biosynthesis of lysine and meso-diaminopimelic acid, an essential component of bacterial cell walls. This chain is Succinyl-diaminopimelate desuccinylase, found in Stutzerimonas stutzeri (strain A1501) (Pseudomonas stutzeri).